We begin with the raw amino-acid sequence, 222 residues long: UPF0488 protein C8orf33 homolog (222 aa).

Over residues 1-16 the composition is skewed to low complexity; the sequence is MAEPGRPAREAPAASS. Disordered stretches follow at residues 1–103, 119–146, and 186–210; these read MAEP…AEQL, KTQR…TPLP, and VSEA…KTTP. Residue A2 is modified to N-acetylalanine. Over residues 17–28 the composition is skewed to basic residues; it reads RKTHRAPRRPRP. Position 27 is an omega-N-methylarginine (R27). Low complexity predominate over residues 29-39; it reads SRSASGASEPP. S75 carries the post-translational modification Phosphoserine. A compositionally biased stretch (low complexity) spans 93-103; the sequence is PPSAEAQAEQL.

The protein belongs to the UPF0488 family.

The protein is UPF0488 protein C8orf33 homolog of Mus musculus (Mouse).